The chain runs to 252 residues: Fructose-1,6-bisphosphatase/inositol-1-monophosphatase (252 aa).

The Mg(2+) site is built by glutamate 65, aspartate 81, isoleucine 83, and aspartate 84. Residues 84 to 86 (DGS), arginine 170, phenylalanine 175, and arginine 194 each bind substrate. Aspartate 201 contributes to the Mg(2+) binding site.

It belongs to the inositol monophosphatase superfamily. FBPase class 4 family. As to quaternary structure, homodimer. Mg(2+) serves as cofactor.

The catalysed reaction is beta-D-fructose 1,6-bisphosphate + H2O = beta-D-fructose 6-phosphate + phosphate. It catalyses the reaction a myo-inositol phosphate + H2O = myo-inositol + phosphate. With respect to regulation, IMPase activity is inhibited by Ca(2+) and Zn(2+). In contrast to mammalian I-1-P phosphatases, is not inhibited by Li(+) up to 100 mM. Its function is as follows. Phosphatase with broad specificity; it can dephosphorylate fructose 1,6-bisphosphate, both D and L isomers of inositol-1-phosphate (I-1-P), 2'-AMP, pNPP, beta-glycerol phosphate, and alpha-D-glucose-1-phosphate. Cannot hydrolyze glucose-6-phosphate, fructose-6-phosphate, NAD(+) or 5'-AMP. May be involved in the biosynthesis of a unique osmolyte, di-myo-inositol 1,1-phosphate. This Methanocaldococcus jannaschii (strain ATCC 43067 / DSM 2661 / JAL-1 / JCM 10045 / NBRC 100440) (Methanococcus jannaschii) protein is Fructose-1,6-bisphosphatase/inositol-1-monophosphatase (suhB).